Here is a 351-residue protein sequence, read N- to C-terminus: uncharacterized protein (351 aa).

5 residues coordinate Mn(2+): Asp-215, Asp-226, His-290, Glu-319, and Glu-333.

Belongs to the peptidase M24B family. Mn(2+) serves as cofactor.

This is an uncharacterized protein from Staphylococcus epidermidis (strain ATCC 35984 / DSM 28319 / BCRC 17069 / CCUG 31568 / BM 3577 / RP62A).